Here is a 482-residue protein sequence, read N- to C-terminus: ATP synthase subunit beta (482 aa).

161–168 (GGAGVGKT) contributes to the ATP binding site.

This sequence belongs to the ATPase alpha/beta chains family. In terms of assembly, F-type ATPases have 2 components, CF(1) - the catalytic core - and CF(0) - the membrane proton channel. CF(1) has five subunits: alpha(3), beta(3), gamma(1), delta(1), epsilon(1). CF(0) has three main subunits: a(1), b(2) and c(9-12). The alpha and beta chains form an alternating ring which encloses part of the gamma chain. CF(1) is attached to CF(0) by a central stalk formed by the gamma and epsilon chains, while a peripheral stalk is formed by the delta and b chains.

The protein localises to the cell inner membrane. It carries out the reaction ATP + H2O + 4 H(+)(in) = ADP + phosphate + 5 H(+)(out). Its function is as follows. Produces ATP from ADP in the presence of a proton gradient across the membrane. The catalytic sites are hosted primarily by the beta subunits. The sequence is that of ATP synthase subunit beta from Solibacter usitatus (strain Ellin6076).